Consider the following 197-residue polypeptide: MTSLYLASGSPRRQELLAQLGVTFERIVTGIEEQRQPQESAQQYVVRLAREKARAGVAQTAKDLPVLGADTIVILNGEVLEKPRDAEHAAQMLRKLSGQTHQVMTAVALADSQHILDCLVVTDVTFRTLTDEDIAGYVASDEPLDKAGAYGIQGLGGCFVRKINGSYHAVVGLPLVETYELLSNFNALREKRDKHDG.

The Proton acceptor role is filled by Asp-70.

The protein belongs to the Maf family. YhdE subfamily. In terms of assembly, homodimer. Can also form homotetramers. The cofactor is a divalent metal cation.

Its subcellular location is the cytoplasm. It catalyses the reaction dTTP + H2O = dTMP + diphosphate + H(+). The catalysed reaction is UTP + H2O = UMP + diphosphate + H(+). It carries out the reaction 5-methyl-UTP + H2O = 5-methyl-UMP + diphosphate + H(+). The enzyme catalyses psi-UTP + H2O = psi-UMP + diphosphate + H(+). It catalyses the reaction 5-methyl-CTP + H2O = 5-methyl-CMP + diphosphate + H(+). Nucleoside triphosphate pyrophosphatase that hydrolyzes dTTP and UTP. Can also hydrolyze TTP and the modified nucleotides 5-methyl-UTP (m(5)UTP), pseudo-UTP and 5-methyl-CTP (m(5)CTP). Has weak activity with CTP. May have a dual role in cell division arrest and in preventing the incorporation of modified nucleotides into cellular nucleic acids. Important in maintenance of cell shape. The polypeptide is dTTP/UTP pyrophosphatase (yhdE) (Escherichia coli (strain K12)).